A 72-amino-acid chain; its full sequence is Large ribosomal subunit protein bL28 (72 aa).

Belongs to the bacterial ribosomal protein bL28 family.

This chain is Large ribosomal subunit protein bL28, found in Chlorobium phaeobacteroides (strain DSM 266 / SMG 266 / 2430).